Here is a 269-residue protein sequence, read N- to C-terminus: Glutamate racemase (269 aa).

Substrate-binding positions include 14–15 (DS) and 46–47 (YS). Catalysis depends on Cys-78, which acts as the Proton donor/acceptor. 79 to 80 (NT) provides a ligand contact to substrate. Cys-189 acts as the Proton donor/acceptor in catalysis. 190–191 (TH) provides a ligand contact to substrate.

The protein belongs to the aspartate/glutamate racemases family.

The enzyme catalyses L-glutamate = D-glutamate. It participates in cell wall biogenesis; peptidoglycan biosynthesis. Provides the (R)-glutamate required for cell wall biosynthesis. This is Glutamate racemase from Haemophilus influenzae (strain ATCC 51907 / DSM 11121 / KW20 / Rd).